Consider the following 368-residue polypeptide: Probable dual-specificity RNA methyltransferase RlmN (368 aa).

Residue Glu111 is the Proton acceptor of the active site. Residues 117–355 (YPNRATLCIS…CTVRDTRGQE (239 aa)) form the Radical SAM core domain. A disulfide bridge links Cys124 with Cys360. [4Fe-4S] cluster-binding residues include Cys131, Cys135, and Cys138. Residues 181 to 182 (GE), Ser215, 238 to 240 (SLH), and Asn317 contribute to the S-adenosyl-L-methionine site. Catalysis depends on Cys360, which acts as the S-methylcysteine intermediate.

Belongs to the radical SAM superfamily. RlmN family. [4Fe-4S] cluster serves as cofactor.

Its subcellular location is the cytoplasm. The enzyme catalyses adenosine(2503) in 23S rRNA + 2 reduced [2Fe-2S]-[ferredoxin] + 2 S-adenosyl-L-methionine = 2-methyladenosine(2503) in 23S rRNA + 5'-deoxyadenosine + L-methionine + 2 oxidized [2Fe-2S]-[ferredoxin] + S-adenosyl-L-homocysteine. It carries out the reaction adenosine(37) in tRNA + 2 reduced [2Fe-2S]-[ferredoxin] + 2 S-adenosyl-L-methionine = 2-methyladenosine(37) in tRNA + 5'-deoxyadenosine + L-methionine + 2 oxidized [2Fe-2S]-[ferredoxin] + S-adenosyl-L-homocysteine. Functionally, specifically methylates position 2 of adenine 2503 in 23S rRNA and position 2 of adenine 37 in tRNAs. The protein is Probable dual-specificity RNA methyltransferase RlmN of Corynebacterium diphtheriae (strain ATCC 700971 / NCTC 13129 / Biotype gravis).